Consider the following 114-residue polypeptide: Anti-sigma-B factor antagonist (114 aa).

Residues 4-114 (SIEIKERDTD…VEGEMNGNNA (111 aa)) enclose the STAS domain. Ser-58 carries the post-translational modification Phosphoserine.

Belongs to the anti-sigma-factor antagonist family. Post-translationally, phosphorylated by RsbW on a serine residue.

In terms of biological role, positive regulator of sigma-B activity. Non-phosphorylated RsbV binds to RsbW, preventing its association with sigma-B. When phosphorylated, releases RsbW, which is then free to complex with and inactivate sigma-B. The chain is Anti-sigma-B factor antagonist (rsbV) from Listeria innocua serovar 6a (strain ATCC BAA-680 / CLIP 11262).